The sequence spans 400 residues: Acetate kinase (400 aa).

Mg(2+) is bound at residue Asn-10. Lys-17 is an ATP binding site. Arg-91 lines the substrate pocket. Asp-150 functions as the Proton donor/acceptor in the catalytic mechanism. Residues 210–214 (HLGNG), 285–287 (DCR), and 333–337 (GIGEN) each bind ATP. Residue Glu-387 participates in Mg(2+) binding.

This sequence belongs to the acetokinase family. As to quaternary structure, homodimer. Requires Mg(2+) as cofactor. Mn(2+) serves as cofactor.

It localises to the cytoplasm. It catalyses the reaction acetate + ATP = acetyl phosphate + ADP. It functions in the pathway metabolic intermediate biosynthesis; acetyl-CoA biosynthesis; acetyl-CoA from acetate: step 1/2. In terms of biological role, catalyzes the formation of acetyl phosphate from acetate and ATP. Can also catalyze the reverse reaction. This is Acetate kinase from Proteus mirabilis (strain HI4320).